A 382-amino-acid polypeptide reads, in one-letter code: S-adenosylmethionine synthase (382 aa).

Residue His15 coordinates ATP. Residue Asp17 participates in Mg(2+) binding. Glu43 contacts K(+). L-methionine-binding residues include Glu56 and Gln99. The segment at 99–109 (QSPDINQGVDR) is flexible loop. ATP-binding positions include 164-166 (DAK), 230-231 (RF), Asp239, 245-246 (RK), Ala262, and Lys266. Asp239 is a binding site for L-methionine. Residue Lys270 coordinates L-methionine.

Belongs to the AdoMet synthase family. Homotetramer; dimer of dimers. Mg(2+) is required as a cofactor. The cofactor is K(+).

Its subcellular location is the cytoplasm. The catalysed reaction is L-methionine + ATP + H2O = S-adenosyl-L-methionine + phosphate + diphosphate. It participates in amino-acid biosynthesis; S-adenosyl-L-methionine biosynthesis; S-adenosyl-L-methionine from L-methionine: step 1/1. Its function is as follows. Catalyzes the formation of S-adenosylmethionine (AdoMet) from methionine and ATP. The overall synthetic reaction is composed of two sequential steps, AdoMet formation and the subsequent tripolyphosphate hydrolysis which occurs prior to release of AdoMet from the enzyme. This is S-adenosylmethionine synthase from Psychromonas ingrahamii (strain DSM 17664 / CCUG 51855 / 37).